The primary structure comprises 121 residues: MRRQKGMTLVEVLVALSVFALAGIAVLQTTARQASSLSRLEEKTFAGWVAENQQVQLRLEQRWPEASWVRGETQFAGLRWHWRWQGVETGDPQTKALDVEVRRNKDAFAADASLRTYVVKQ.

Positions 1–6 (MRRQKG) are cleaved as a propeptide — leader sequence. Met7 carries the post-translational modification N-methylmethionine. The helical transmembrane segment at 7-27 (MTLVEVLVALSVFALAGIAVL) threads the bilayer.

It belongs to the GSP I family. As to quaternary structure, type II secretion is composed of four main components: the outer membrane complex, the inner membrane complex, the cytoplasmic secretion ATPase and the periplasm-spanning pseudopilus. Interacts with core component OutG. In terms of processing, cleaved by prepilin peptidase. Post-translationally, methylated by prepilin peptidase at the amino group of the N-terminal methionine once the leader sequence is cleaved by prepilin peptidase.

The protein localises to the cell inner membrane. In terms of biological role, component of the type II secretion system required for the energy-dependent secretion of extracellular factors such as proteases and toxins from the periplasm. Part of the pseudopilus tip complex that is critical for the recognition and binding of secretion substrates. The chain is Type II secretion system protein I (outI) from Pectobacterium carotovorum subsp. carotovorum (Erwinia carotovora subsp. carotovora).